A 130-amino-acid polypeptide reads, in one-letter code: DNA-directed RNA polymerase subunit omega (130 aa).

The tract at residues 110–130 is disordered; that stretch reads EELLKGLEGLAPPEEQPEEEE.

This sequence belongs to the RNA polymerase subunit omega family. As to quaternary structure, the RNAP catalytic core consists of 2 alpha, 1 beta, 1 beta' and 1 omega subunit. When a sigma factor is associated with the core the holoenzyme is formed, which can initiate transcription.

The enzyme catalyses RNA(n) + a ribonucleoside 5'-triphosphate = RNA(n+1) + diphosphate. Its function is as follows. Promotes RNA polymerase assembly. Latches the N- and C-terminal regions of the beta' subunit thereby facilitating its interaction with the beta and alpha subunits. In Afipia carboxidovorans (strain ATCC 49405 / DSM 1227 / KCTC 32145 / OM5) (Oligotropha carboxidovorans), this protein is DNA-directed RNA polymerase subunit omega.